A 417-amino-acid polypeptide reads, in one-letter code: Probable phosphoglycerate kinase (417 aa).

Positions 23, 24, 25, 26, 38, 39, 62, 63, 65, 66, 121, 122, 169, and 170 each coordinate (2R)-3-phosphoglycerate. Position 213 (Gly-213) interacts with ADP. Gly-213 is a CDP binding site. AMP contacts are provided by Ala-214 and Lys-215. Ala-214 lines the ATP pocket. Ala-214 is a binding site for Mg(2+). Mg(2+)-binding residues include Ala-217 and Asp-218. Asp-218 is a CDP binding site. Lys-219 contributes to the AMP binding site. Lys-219 lines the ATP pocket. Position 237 (Gly-237) interacts with ADP. Gly-237 contacts CDP. AMP is bound by residues Gly-238 and Gly-312. ATP-binding residues include Gly-238 and Gly-312. CDP is bound by residues Gly-337, Ala-339, and Phe-342. Phe-342 is an ADP binding site. Glu-343 serves as a coordination point for AMP. The ATP site is built by Glu-343, Asp-374, and Thr-375. Residue Asp-374 coordinates Mg(2+).

Belongs to the phosphoglycerate kinase family. In terms of assembly, monomer. The cofactor is Mg(2+).

Its subcellular location is the cytoplasm. The enzyme catalyses (2R)-3-phosphoglycerate + ATP = (2R)-3-phospho-glyceroyl phosphate + ADP. The protein operates within carbohydrate degradation; glycolysis; pyruvate from D-glyceraldehyde 3-phosphate: step 2/5. This chain is Probable phosphoglycerate kinase (pgk-1), found in Caenorhabditis elegans.